Consider the following 396-residue polypeptide: Elongation factor Tu (396 aa).

The tr-type G domain maps to 10-206 (KPHVNVGTIG…ALDSYIPTPK (197 aa)). A G1 region spans residues 19–26 (GHVDHGKT). GTP is bound at residue 19-26 (GHVDHGKT). T26 is a Mg(2+) binding site. Residues 60-64 (GITIS) form a G2 region. The segment at 81 to 84 (DCPG) is G3. GTP-binding positions include 81–85 (DCPGH) and 136–139 (NKAD). Residues 136 to 139 (NKAD) form a G4 region. The segment at 174–176 (SAL) is G5.

It belongs to the TRAFAC class translation factor GTPase superfamily. Classic translation factor GTPase family. EF-Tu/EF-1A subfamily. In terms of assembly, monomer.

Its subcellular location is the cytoplasm. The catalysed reaction is GTP + H2O = GDP + phosphate + H(+). Its function is as follows. GTP hydrolase that promotes the GTP-dependent binding of aminoacyl-tRNA to the A-site of ribosomes during protein biosynthesis. This Vesicomyosocius okutanii subsp. Calyptogena okutanii (strain HA) protein is Elongation factor Tu.